We begin with the raw amino-acid sequence, 211 residues long: Ribosomal RNA small subunit methyltransferase G (211 aa).

S-adenosyl-L-methionine is bound by residues Gly-76, Leu-81, Val-127–Glu-128, and Arg-142.

The protein belongs to the methyltransferase superfamily. RNA methyltransferase RsmG family.

It localises to the cytoplasm. It catalyses the reaction guanosine(527) in 16S rRNA + S-adenosyl-L-methionine = N(7)-methylguanosine(527) in 16S rRNA + S-adenosyl-L-homocysteine. In terms of biological role, specifically methylates the N7 position of guanine in position 527 of 16S rRNA. The chain is Ribosomal RNA small subunit methyltransferase G from Vibrio campbellii (strain ATCC BAA-1116).